We begin with the raw amino-acid sequence, 602 residues long: Glutamyl-tRNA(Gln) amidotransferase subunit B, mitochondrial (602 aa).

Residues 1 to 56 constitute a mitochondrion transit peptide; sequence MFRSCLRHCRRATVRSRTCPRCSHHEIPQLQVVQRQISLSSSFPHIRRLQTSSTDT.

It belongs to the GatB/GatE family. GatB subfamily. In terms of assembly, subunit of the heterotrimeric GatCAB amidotransferase (AdT) complex, composed of A, B and C subunits.

The protein resides in the mitochondrion. It carries out the reaction L-glutamyl-tRNA(Gln) + L-glutamine + ATP + H2O = L-glutaminyl-tRNA(Gln) + L-glutamate + ADP + phosphate + H(+). Allows the formation of correctly charged Gln-tRNA(Gln) through the transamidation of misacylated Glu-tRNA(Gln) in the mitochondria. The reaction takes place in the presence of glutamine and ATP through an activated gamma-phospho-Glu-tRNA(Gln). This chain is Glutamyl-tRNA(Gln) amidotransferase subunit B, mitochondrial (nempA), found in Emericella nidulans (strain FGSC A4 / ATCC 38163 / CBS 112.46 / NRRL 194 / M139) (Aspergillus nidulans).